Here is a 1136-residue protein sequence, read N- to C-terminus: MVWLEPPLLLPIFFLASHVGAAVDLTLLADLRLTEPQRFFLTCVSGEAGAGRGSDAWGPPLLLEKDDRIVRTPRPWQPPHIARNGSSRVTVRGFSQPSDLVGVFSCVGGGGTRVLYVHNSPGAHLLPDKVTHTVNKGDTAVLSARVRKEKQTDVIWKSNGSYFYTLDRHEAQDGQFLLQLPNVQPSSSGIYSATYLEASPLGSAFFRLIVRGCEAGRWGQDCTKECPGCLHGGVCHDQDGECVCPPGFTGTRCEQACREGRFGQSCQEQCPGTSGCRGLTFCLPDPYGCSCGSGWRGSQCQEACAPGRFGADCHLQCQCQNGGTCDRFSGCVCPSGWHGMHCEKSDRIPQILDMVSELEFNLDTMPRINCAAAGNPFPVRGSMELRKPDGTVLLSTKAIVEPDRTTAEFEVPRLALGDSGLWECRVSTSGGQDSRRFRINVKVPPVPLTAPRLLAKQSRQLVVSPLVSFSGDGPIASVRLHYRPQDSTMAWSTIVVDPSENVTLMNLRPKTGYSVRVQLSRPGEGGEGAWGPPTLMTTDCPEPLLKPWLEGWHVEGPDRLRVSWSLPPVPGPLVGDGFLLRLWDGARGQERRENVSSPQARTALLTGLTPGTYYQLDVRLYHCTLLGPASPAARVLLPPSGPPAPRHLHAQALSDSEIQLMWQRPEAAAGPISKYIVEVQVAGGSGDPLWMDVDRPEETSTIVRGLNASTRYLFRVRASVQGPGDWSNVVEQSTLGNGLQIEGPVQEIHAAEEGLDQQLVLAVVGSVSATCLTILAALLTLACIRKSCLHRRRTFTYQSGSGEETILQFSSGTLTLTRRPKPQPEPLNYPVLEWEDITFEDLIGEGNFGQVIRAMIKKDGLKMNAAIKMLKEYASENDHRDFAGELEVLCKLGHHPNIINLLGACENRGYLYIAIEYAPYGNLLDFLRKSRVLETDPAFAREHGTASTLSSRQLLRFASDAANGMQYLSEKQFIHRDLAARNVLVGENLASKIADFGLSRGEEVYVKKTMGRLPVRWMAIESLNYSVYTTKSDVWSFGVLLWEIVSLGGTPYCGMTCAELYEKLPQAYRMEQPRNCDDEVYELMRQCWRDRPYERPPFAQIALQLGRMLEARKAYVNMSLFENFTYAGIDATAEEA.

The N-terminal stretch at M1–V23 is a signal peptide. The Extracellular portion of the chain corresponds to D24–Q757. In terms of domain architecture, Ig-like C2-type 1 spans C43–C106. N-linked (GlcNAc...) asparagine glycosylation is found at N84 and N159. EGF-like domains follow at residues G212–E254, A256–Q301, and A303–E343. Intrachain disulfides connect C226-C235, C229-C242, and C244-C253. 3 disulfides stabilise this stretch: C317-C325, C319-C331, and C333-C342. The Ig-like C2-type 2 domain occupies C370 to C424. 3 consecutive Fibronectin type-III domains span residues P444 to P543, K546 to S640, and A644 to N737. N501, N594, and N707 each carry an N-linked (GlcNAc...) asparagine glycan. The chain crosses the membrane as a helical span at residues Q758–A782. The Cytoplasmic segment spans residues C783–A1136. In terms of domain architecture, Protein kinase spans I837–V1116. ATP-binding positions include I843–V851 and K868. The active-site Proton acceptor is D977. A Phosphotyrosine; by autocatalysis modification is found at Y1005.

This sequence belongs to the protein kinase superfamily. Tyr protein kinase family. Tie subfamily. In terms of assembly, heterodimer with TEK/TIE2. Interacts with SVEP1 (via C-terminus). In terms of processing, phosphorylated on tyrosine residues in response to ANGPT1, most likely by TEK/TIE2. In terms of tissue distribution, specifically expressed in developing vascular endothelial cells.

It is found in the cell membrane. The enzyme catalyses L-tyrosyl-[protein] + ATP = O-phospho-L-tyrosyl-[protein] + ADP + H(+). Functionally, transmembrane tyrosine-protein kinase that may modulate TEK/TIE2 activity and contribute to the regulation of angiogenesis. This Bos taurus (Bovine) protein is Tyrosine-protein kinase receptor Tie-1 (TIE1).